A 150-amino-acid polypeptide reads, in one-letter code: Ribosome maturation factor RimP (150 aa).

The protein belongs to the RimP family.

The protein localises to the cytoplasm. Required for maturation of 30S ribosomal subunits. In Thermotoga maritima (strain ATCC 43589 / DSM 3109 / JCM 10099 / NBRC 100826 / MSB8), this protein is Ribosome maturation factor RimP.